The sequence spans 87 residues: Cytochrome c oxidase subunit 6B1 (87 aa).

Residues 28–74 enclose the CHCH domain; it reads TRNCWQNYLDFHRCQKAMTTKGGNVSVCEWYQRVYQSLCPTSWVTDW. The short motif at 31 to 41 is the Cx9C motif element; sequence CWQNYLDFHRC. Cystine bridges form between cysteine 31/cysteine 66 and cysteine 41/cysteine 55. Positions 55-66 match the Cx10C motif motif; the sequence is CEWYQRVYQSLC.

Its subcellular location is the mitochondrion intermembrane space. Connects the two COX monomers into the physiological dimeric form. The polypeptide is Cytochrome c oxidase subunit 6B1 (COX6B1) (Macaca fascicularis (Crab-eating macaque)).